The following is a 771-amino-acid chain: Polyribonucleotide nucleotidyltransferase (771 aa).

Mg(2+)-binding residues include Asp-487 and Asp-493. Residues 554–613 (PRIETMQIDKAKIRDVIGTGGKVIREIVATTGAKVDIDDEGLIKISSSDLDQIEAARKWI) form the KH domain. Positions 623 to 691 (GKIYDGKVVN…PRGKVRLSMR (69 aa)) constitute an S1 motif domain. The interval 696 to 771 (ETGAELEDTR…QGHVPDFLKD (76 aa)) is disordered. Basic and acidic residues predominate over residues 702 to 771 (EDTRPAREPR…QGHVPDFLKD (70 aa)).

Belongs to the polyribonucleotide nucleotidyltransferase family. Mg(2+) is required as a cofactor.

The protein resides in the cytoplasm. The enzyme catalyses RNA(n+1) + phosphate = RNA(n) + a ribonucleoside 5'-diphosphate. Its function is as follows. Involved in mRNA degradation. Catalyzes the phosphorolysis of single-stranded polyribonucleotides processively in the 3'- to 5'-direction. This Sphingopyxis alaskensis (strain DSM 13593 / LMG 18877 / RB2256) (Sphingomonas alaskensis) protein is Polyribonucleotide nucleotidyltransferase.